Reading from the N-terminus, the 422-residue chain is Carboxypeptidase B2 (422 aa).

An N-terminal signal peptide occupies residues 1 to 21; that stretch reads MKLYGLGVLVAIILYEKHGLA. A propeptide spans 22–113 (activation peptide); it reads FQSGHVLSAL…QTSNDTVSPR (92 aa). N-linked (GlcNAc...) asparagine glycosylation is found at Asn-43, Asn-72, Asn-84, and Asn-107. The region spanning 121 to 418 is the Peptidase M14 domain; that stretch reads QYHSLNEIYS…AAVSKIAWHV (298 aa). Cys-177 and Cys-190 are oxidised to a cystine. 2 residues coordinate Zn(2+): His-180 and Glu-183. Substrate is bound by residues 180-183 and Arg-238; that span reads HARE. A glycan (N-linked (GlcNAc...) asparagine) is linked at Asn-240. Cystine bridges form between Cys-249–Cys-273 and Cys-264–Cys-278. Residue 255–256 participates in substrate binding; that stretch reads NR. His-309 is a Zn(2+) binding site. 310 to 311 lines the substrate pocket; that stretch reads SY. An N-linked (GlcNAc...) asparagine glycan is attached at Asn-322. Tyr-362 serves as a coordination point for substrate. The active-site Proton donor/acceptor is the Glu-384.

The protein belongs to the peptidase M14 family. The cofactor is Zn(2+). In terms of tissue distribution, plasma; synthesized in the liver.

The protein resides in the secreted. The catalysed reaction is Release of C-terminal Arg and Lys from a polypeptide.. With respect to regulation, TAFI/CPB2 is unique among carboxypeptidases in that it spontaneously inactivates with a short half-life, a property that is crucial for its role in controlling blood clot lysis. The zymogen is stabilized by interactions with the activation peptide. Release of the activation peptide increases a dynamic flap mobility and in time this leads to conformational changes that disrupt the catalytic site and expose a cryptic thrombin-cleavage site present at Arg-323. Its function is as follows. Cleaves C-terminal arginine or lysine residues from biologically active peptides such as kinins or anaphylatoxins in the circulation thereby regulating their activities. Down-regulates fibrinolysis by removing C-terminal lysine residues from fibrin that has already been partially degraded by plasmin. This is Carboxypeptidase B2 (Cpb2) from Rattus norvegicus (Rat).